Reading from the N-terminus, the 305-residue chain is NAD kinase (305 aa).

The Proton acceptor role is filled by Asp-84. NAD(+) contacts are provided by residues 84 to 85 (DG), 159 to 160 (NE), His-170, Arg-187, Asp-189, 200 to 205 (TAYSLS), and Gln-260.

The protein belongs to the NAD kinase family. A divalent metal cation serves as cofactor.

It localises to the cytoplasm. The enzyme catalyses NAD(+) + ATP = ADP + NADP(+) + H(+). Its function is as follows. Involved in the regulation of the intracellular balance of NAD and NADP, and is a key enzyme in the biosynthesis of NADP. Catalyzes specifically the phosphorylation on 2'-hydroxyl of the adenosine moiety of NAD to yield NADP. The chain is NAD kinase from Pasteurella multocida (strain Pm70).